Reading from the N-terminus, the 352-residue chain is Enhancer of mRNA-decapping protein 1 (352 aa).

Disordered regions lie at residues 1–258 (MMAH…PRNH) and 277–352 (QYPQ…SSKS). Positions 71–80 (HTSSNTSNNK) are enriched in low complexity. Composition is skewed to polar residues over residues 93-104 (NFGNESSHQNGG) and 205-225 (TEPNYHVNPQVNTPPQHSVNV). Residues 289 to 309 (GGVYPMVAPQYQQQPQQHPQQ) are compositionally biased toward low complexity.

This sequence belongs to the EDC family.

Its subcellular location is the cytoplasm. Functionally, mRNA-binding protein which stimulates mRNA decapping. In Debaryomyces hansenii (strain ATCC 36239 / CBS 767 / BCRC 21394 / JCM 1990 / NBRC 0083 / IGC 2968) (Yeast), this protein is Enhancer of mRNA-decapping protein 1 (EDC1).